Here is a 56-residue protein sequence, read N- to C-terminus: Small ribosomal subunit protein eS31 (56 aa).

The Zn(2+) site is built by cysteine 28, cysteine 31, cysteine 46, and cysteine 49. The C4-type zinc finger occupies 28-49 (CPRCGPGVFMANHKDRWSCGRC).

This sequence belongs to the eukaryotic ribosomal protein eS31 family. As to quaternary structure, part of the 30S ribosomal subunit. The cofactor is Zn(2+).

The polypeptide is Small ribosomal subunit protein eS31 (Thermococcus gammatolerans (strain DSM 15229 / JCM 11827 / EJ3)).